Here is a 238-residue protein sequence, read N- to C-terminus: Uridylate kinase (238 aa).

An ATP-binding site is contributed by 12–15; it reads KLSG. G54 lines the UMP pocket. Positions 55 and 59 each coordinate ATP. UMP is bound by residues D74 and 135–142; that span reads TGNPFFTT. Positions 162, 163, 168, and 171 each coordinate ATP.

The protein belongs to the UMP kinase family. Homohexamer.

The protein resides in the cytoplasm. It carries out the reaction UMP + ATP = UDP + ADP. It participates in pyrimidine metabolism; CTP biosynthesis via de novo pathway; UDP from UMP (UMPK route): step 1/1. Its activity is regulated as follows. Inhibited by UTP. Functionally, catalyzes the reversible phosphorylation of UMP to UDP. In Rhodopseudomonas palustris (strain BisA53), this protein is Uridylate kinase.